We begin with the raw amino-acid sequence, 299 residues long: Streptogrisin-B (299 aa).

Positions 1–38 (MRIKRTSNRSNAARRVRTTAVLAGLAAVAALAVPTANA) are cleaved as a signal peptide. The propeptide occupies 39 to 114 (ETPRTFSANQ…ERTPGKFTKL (76 aa)). Residues Cys128 and Cys148 are joined by a disulfide bond. Residues His147, Asp177, and Ser255 each act as charge relay system in the active site. A disulfide bond links Cys249 and Cys276.

It belongs to the peptidase S1 family. As to quaternary structure, monomer.

The enzyme catalyses Hydrolysis of proteins with trypsin-like specificity.. Functionally, has a primary specificity for large aliphatic or aromatic amino acids. The sequence is that of Streptogrisin-B (sprB) from Streptomyces griseus.